The following is a 319-amino-acid chain: Lipooligosaccharide heptosyltransferase 2 (319 aa).

It belongs to the glycosyltransferase 9 family.

It carries out the reaction an L-alpha-D-Hep-(1-&gt;5)-[alpha-Kdo-(2-&gt;4)]-alpha-Kdo-(2-&gt;6)-lipid A + ADP-L-glycero-beta-D-manno-heptose = an L-alpha-D-Hep-(1-&gt;3)-L-alpha-D-Hep-(1-&gt;5)-[alpha-Kdo-(2-&gt;4)]-alpha-Kdo-(2-&gt;6)-lipid A + ADP + H(+). Its pathway is bacterial outer membrane biogenesis; LOS core biosynthesis. Functionally, glycosyltransferase involved in the biosynthesis of the core oligosaccharide region of lipooligosaccharide (LOS). Catalyzes the addition of the second heptose unit to the heptosyl-Kdo2-lipid A module. The protein is Lipooligosaccharide heptosyltransferase 2 of Campylobacter jejuni subsp. jejuni serotype O:2 (strain ATCC 700819 / NCTC 11168).